A 408-amino-acid polypeptide reads, in one-letter code: Putative transporter AmpG 2 (408 aa).

Helical transmembrane passes span 10–30 (YISN…IYLL), 49–69 (IGLF…GPLL), 84–104 (YCLI…TNFN), 109–129 (FIPF…YDML), 154–174 (FRIG…IISW), 177–197 (VYRS…IYPL), 224–244 (WLII…LSIM), 261–281 (LGYK…GGFL), 294–311 (ALIY…LYFY), 315–337 (ITSL…SPFF), 353–373 (IALI…ISGY), and 378–398 (LGWT…YILI).

This sequence belongs to the major facilitator superfamily.

The protein resides in the cell inner membrane. This Rickettsia felis (strain ATCC VR-1525 / URRWXCal2) (Rickettsia azadi) protein is Putative transporter AmpG 2 (ampG2).